A 362-amino-acid chain; its full sequence is Protein indeterminate-domain 16 (362 aa).

The interval 1-22 (MELTQPIRENGDPQGHQLTDPD) is disordered. 2 consecutive C2H2-type zinc fingers follow at residues 39 to 61 (YVCE…RRRH) and 82 to 112 (YVCP…RRKH). The CCHC-type 1; atypical zinc finger occupies 118-142 (WVCERCSKGYAVQSDYKAHLKTCGS). 8 residues coordinate Zn(2+): C120, C123, H136, C140, C147, C149, H162, and C166. Residues 145–168 (HSCDCGRVFSRVESFIEHQDTCTI) form a CCHC-type 2; atypical zinc finger. The segment at 155 to 167 (RVESFIEHQDTCT) is SHR-binding. The tract at residues 247-278 (SAQARHNEKRETSLTKERANEEARKAEETRQE) is disordered. A compositionally biased stretch (basic and acidic residues) spans 251–278 (RHNEKRETSLTKERANEEARKAEETRQE). The stretch at 252-319 (HNEKRETSLT…VREEAIKRIN (68 aa)) forms a coiled coil.

In terms of tissue distribution, highly expressed in leaves, hypocotyls, roots, vasculature of cotyledons, floral organs and in the endodermis and vasculaturenof inflorescence stems.

It is found in the nucleus. In terms of biological role, transcription factor regulating lateral organ morphogenesis and gravitropic responses. Has a redundant role with IDD14 in directing leaf and floral organ morphogenesis. Acts cooperatively with IDD15 to control silique and branche orientation. Involved in the establishment of auxin gradients through the regulation of auxin biosynthesis and transport. The chain is Protein indeterminate-domain 16 from Arabidopsis thaliana (Mouse-ear cress).